Consider the following 293-residue polypeptide: SAGA-associated factor 29 (293 aa).

Positions 3–88 (LVSADSRIAE…KALDKIAEIK (86 aa)) form a coiled coil. The SGF29 C-terminal domain occupies 152-293 (GDYVAKPGDK…VVACKEPKKK (142 aa)). Histone H3K4me3 N-terminus binding stretches follow at residues 194 to 196 (DID) and 240 to 243 (QTTC). A histone H3K4me3 binding region spans residues 264 to 266 (FED). At Lys-288 the chain carries N6-acetyllysine.

The protein belongs to the SGF29 family. In terms of assembly, interacts with dimethylated and trimethylated 'Lys-4' of histone H3 (H3K4me2 and H3K4me3), with a preference for the trimethylated form (H3K4me3). Component of some SAGA-type complexes. Component of the ADA2A-containing complex (ATAC), composed of KAT14, KAT2A, TADA2L, TADA3L, ZZ3, MBIP, WDR5, YEATS2, CCDC101 and DR1. Interacts with (methylated) CGAS. Interacts with TADA3L, GCN5L2, SUPT3H and MYC. In terms of tissue distribution, widely expressed with highest levels in testis. Highly expressed in hepatoma and other tumor cell lines.

It is found in the nucleus. In terms of biological role, chromatin reader component of some histone acetyltransferase (HAT) SAGA-type complexes like the TFTC-HAT, ATAC or STAGA complexes. SGF29 specifically recognizes and binds methylated 'Lys-4' of histone H3 (H3K4me), with a preference for trimethylated form (H3K4me3). In the SAGA-type complexes, SGF29 is required to recruit complexes to H3K4me. Involved in the response to endoplasmic reticulum (ER) stress by recruiting the SAGA complex to H3K4me, thereby promoting histone H3 acetylation and cell survival. Also binds non-histone proteins that are methylated on Lys residues: specifically recognizes and binds CGAS monomethylated on 'Lys-491'. May be involved in MYC-mediated oncogenic transformation. The protein is SAGA-associated factor 29 of Rattus norvegicus (Rat).